The primary structure comprises 214 residues: Large ribosomal subunit protein uL1 (214 aa).

The protein belongs to the universal ribosomal protein uL1 family. Part of the 50S ribosomal subunit.

In terms of biological role, binds directly to 23S rRNA. Probably involved in E site tRNA release. Protein L1 is also a translational repressor protein, it controls the translation of its operon by binding to its mRNA. The sequence is that of Large ribosomal subunit protein uL1 from Methanopyrus kandleri (strain AV19 / DSM 6324 / JCM 9639 / NBRC 100938).